The sequence spans 177 residues: MIEHDDLALFRTAIKGTKKIKQDTFVPKTMPRKKVSEWRETQQQKDTEFFFSDEYEPLLKEENEKVKYLRADIDPYILKQLGRGDFQPDLFLDLHGLTRQKAKTELAALILACEREQVYCASIMTGYGTRTLKEQIPRWLVQHPKVIALHQAPKQWGGDAAILVLIEQPESLEKRLF.

The region spanning 92-167 (LDLHGLTRQK…GDAAILVLIE (76 aa)) is the Smr domain.

This sequence belongs to the SmrB family. As to quaternary structure, associates with collided ribosomes, but not with correctly translating polysomes.

Its function is as follows. Acts as a ribosome collision sensor. Detects stalled/collided disomes (pairs of ribosomes where the leading ribosome is stalled and a second ribosome has collided with it) and endonucleolytically cleaves mRNA at the 5' boundary of the stalled ribosome. Stalled/collided disomes form a new interface (primarily via the 30S subunits) that binds SmrB. Cleaved mRNA becomes available for tmRNA ligation, leading to ribosomal subunit dissociation and rescue of stalled ribosomes. In Haemophilus ducreyi (strain 35000HP / ATCC 700724), this protein is Ribosome rescue factor SmrB.